A 316-amino-acid polypeptide reads, in one-letter code: Secondary metabolism regulator LAE1 (316 aa).

The protein belongs to the methyltransferase superfamily. LaeA methyltransferase family. In terms of assembly, component of the heterotrimeric velvet complex composed of LAE1, VEL1 and VEL2; VEL1 acting as a bridging protein between LAE1 and VEL2. Interacts with VEL1.

The protein resides in the nucleus. The enzyme catalyses L-methionyl-[protein] + S-adenosyl-L-methionine = S-methyl-L-methionyl-[protein] + S-adenosyl-L-homocysteine. Functionally, methyltransferase that performs automethylation. No other methyl-accepting substrate has been identified yet. Component of the velvet transcription factor complex that acts as a global regulator for secondary metabolite gene expression. Controls the expression of the gibberellins gene clusters, but does not affect bikaverin production. Controls the expression of the fusaric acid gene cluster. Acts as a virulence factors during infection, most likely through activation of gibberellins biosynthesis. In Gibberella fujikuroi (strain CBS 195.34 / IMI 58289 / NRRL A-6831) (Bakanae and foot rot disease fungus), this protein is Secondary metabolism regulator LAE1.